We begin with the raw amino-acid sequence, 209 residues long: Small ribosomal subunit protein uS4 (209 aa).

The span at 1-13 (MSTKSRTRSKTRL) shows a compositional bias: basic residues. 2 disordered regions span residues 1-20 (MSTK…LGIP) and 28-49 (YLEK…QDSD). In terms of domain architecture, S4 RNA-binding spans 95-176 (QRLDALVVRS…PKLPSYLEVE (82 aa)).

It belongs to the universal ribosomal protein uS4 family. As to quaternary structure, part of the 30S ribosomal subunit. Contacts protein S5. The interaction surface between S4 and S5 is involved in control of translational fidelity.

Its function is as follows. One of the primary rRNA binding proteins, it binds directly to 16S rRNA where it nucleates assembly of the body of the 30S subunit. With S5 and S12 plays an important role in translational accuracy. In Clavibacter michiganensis subsp. michiganensis (strain NCPPB 382), this protein is Small ribosomal subunit protein uS4.